The sequence spans 225 residues: Peptidyl-tRNA hydrolase (225 aa).

Tyr14 serves as a coordination point for tRNA. His19 functions as the Proton acceptor in the catalytic mechanism. Residues Phe64, Asn66, and Asn112 each coordinate tRNA. The tract at residues 182-225 (AVALRMQPPKPEKPKPAAKAPEAQAPEAAPDERSALQKLADRFR) is disordered. Residues 198-209 (AAKAPEAQAPEA) are compositionally biased toward low complexity. A compositionally biased stretch (basic and acidic residues) spans 211–225 (PDERSALQKLADRFR).

Belongs to the PTH family. In terms of assembly, monomer.

The protein localises to the cytoplasm. The enzyme catalyses an N-acyl-L-alpha-aminoacyl-tRNA + H2O = an N-acyl-L-amino acid + a tRNA + H(+). Hydrolyzes ribosome-free peptidyl-tRNAs (with 1 or more amino acids incorporated), which drop off the ribosome during protein synthesis, or as a result of ribosome stalling. In terms of biological role, catalyzes the release of premature peptidyl moieties from peptidyl-tRNA molecules trapped in stalled 50S ribosomal subunits, and thus maintains levels of free tRNAs and 50S ribosomes. The polypeptide is Peptidyl-tRNA hydrolase (Cereibacter sphaeroides (strain ATCC 17029 / ATH 2.4.9) (Rhodobacter sphaeroides)).